The sequence spans 199 residues: Cytochrome c-type cyt cy (199 aa).

The chain crosses the membrane as a helical span at residues 7–27 (ITKIGVTLFAVALFYGFIYML). Residues 69 to 80 (AAETAEAAAPAE) show a composition bias toward low complexity. The interval 69-93 (AAETAEAAAPAEPAAPPPPAYVEVD) is disordered. Residues Cys112, Cys115, His116, and Met148 each contribute to the heme c site.

In terms of processing, binds 1 heme c group covalently per subunit.

It is found in the cell membrane. Electron transfer pathways that operates during photosynthesis. The chain is Cytochrome c-type cyt cy (cycY) from Rhodobacter capsulatus (strain ATCC BAA-309 / NBRC 16581 / SB1003).